Here is a 769-residue protein sequence, read N- to C-terminus: Polymerase basic protein 2 (769 aa).

A Nuclear localization signal motif is present at residues 753–756; the sequence is KRRR.

It belongs to the influenza viruses PB2 family. RNA polymerase is composed of three subunits: PA, PB1 and PB2.

The protein resides in the virion. Its subcellular location is the host nucleus. Functionally, subunit of the RNA-dependent RNA polymerase which is responsible for replication and transcription of virus RNA segments. The transcription of viral mRNAs occurs by a unique mechanism called cap-snatching. 5' methylated caps of cellular mRNAs are cleaved after 10-13 nucleotides by PA. In turn, these short capped RNAs are used as primers by PB1 for transcription of viral mRNAs. During virus replication, PB1 initiates RNA synthesis and copy vRNA into complementary RNA (cRNA) which in turn serves as a template for the production of more vRNAs. The chain is Polymerase basic protein 2 from Amblyomma variegatum (Tropical bont tick).